A 317-amino-acid polypeptide reads, in one-letter code: NF-kappa-B inhibitor alpha (317 aa).

The disordered stretch occupies residues 1 to 39; the sequence is MFQAAERPQEWAMEGPRDGLKKERLLDDRHDSGLDSMKD. Positions 15–39 are enriched in basic and acidic residues; that stretch reads GPRDGLKKERLLDDRHDSGLDSMKD. K21 participates in a covalent cross-link: Glycyl lysine isopeptide (Lys-Gly) (interchain with G-Cter in SUMO); alternate. K21 participates in a covalent cross-link: Glycyl lysine isopeptide (Lys-Gly) (interchain with G-Cter in ubiquitin); alternate. Residue K22 forms a Glycyl lysine isopeptide (Lys-Gly) (interchain with G-Cter in ubiquitin) linkage. The Destruction motif signature appears at 30–36; sequence HDSGLDS. S32 bears the Phosphoserine; by IKKA and IKKE mark. Phosphoserine; by IKKA, IKKB, IKKE and TBK1 is present on S36. Y42 bears the Phosphotyrosine; by Tyr-kinases mark. The short motif at 45–54 is the Nuclear export signal element; that stretch reads MVKELQEIRL. 5 ANK repeats span residues 73 to 103, 110 to 139, 143 to 172, 182 to 211, and 216 to 245; these read DGDSFLHLAIIHEEKALTMEVIRQVKGDLAF, LQQTPLHLAVITNQPEIAEALLGAGCDPEL, RGNTPLHLACEQGCLASVGVLTQSCTTPHL, NGHTCLHLASIHGYLGIVELLVSLGADVNA, and NGRTALHLAVDLQNPDLVSLLLKCGADVNR. Residues 110-120 carry the Nuclear import signal motif; the sequence is LQQTPLHLAVI. Residues N210 and N244 each carry the (3S)-3-hydroxyasparagine; by HIF1AN; partial modification. S283 and S288 each carry phosphoserine; by CK2. T291 is modified (phosphothreonine; by CK2). S293 carries the post-translational modification Phosphoserine; by CK2. T299 bears the Phosphothreonine; by CK2 mark.

This sequence belongs to the NF-kappa-B inhibitor family. Interacts with RELA; the interaction requires the nuclear import signal. Part of a 70-90 kDa complex at least consisting of CHUK, IKBKB, NFKBIA, RELA, ELP1 and MAP3K14. Interacts with NKIRAS1 and NKIRAS2. Interacts with isoform 1 and isoform 2 of RWDD3; the interaction enhances sumoylation. Interacts with PRMT2. Interacts with PRKACA in platelets; this interaction is disrupted by thrombin and collagen. Interacts with MEFV. Interacts with DDRGK1; positively regulates NFKBIA phosphorylation and degradation. Interacts with HNRNPA2B1; the interaction may be mediated by the RRM2 domain of HNRNPA2B1, and HNRNPA2B1 may interact simultaneously with FAM76B and either NFKBIA or NFKBIE to form a complex. As to quaternary structure, (Microbial infection) Interacts with HBV protein X. In terms of processing, phosphorylated at Ser-32 and Ser-36 by IKKA/CHUK and IKKB/IKBKB; disables inhibition of NF-kappa-B DNA-binding activity. Phosphorylation at positions 32 and 36 is prerequisite to recognition by the SCF(FBXW11) and SCF(BTRC) complexes, leading to polyubiquitination and subsequent degradation. Phosphorylated at Ser-32 in response to FK506 treatment: phosphorylation is independent of IKKA/CHUK and IKKB/IKBKB and promotes NFKBIA degradation, followed by NF-kappa-B activation. Phosphorylated at Tyr-42: its effect is however unclear. According to a report, phosphorylation at Tyr-42 activates NF-kappa-B without triggering proteolytic degradation of NFKBIA. According to another publication, phosphorylation at Tyr-42 inhibits NF-kappa-B activity by preventing phosphorylation at Ser-32 and Ser-36 and subsequent ubiquitination and degradation. Polyubiquitinated at Lys-21 and/or Lys-22 following phosphorylation at Ser-32 and Ser-36. Monoubiquitinated at Lys-21 and/or Lys-22 by UBE2D3. Ubiquitin chain elongation is then performed by CDC34 in cooperation with the SCF(FBXW11) E3 ligase complex, building ubiquitin chains from the UBE2D3-primed NFKBIA-linked ubiquitin. The resulting polyubiquitination leads to protein degradation. Also ubiquitinated by the SCF(BTRC) complex following stimulus-dependent phosphorylation at Ser-32 and Ser-36. Deubiquitinated by USP38, leading to NF-kappa-B inhibition. Post-translationally, sumoylated; sumoylation requires the presence of the nuclear import signal. Sumoylation blocks ubiquitination and proteasome-mediated degradation of the protein thereby increasing the protein stability. In terms of processing, hydroxylated by HIF1AN. (Microbial infection) Deubiquitinated by porcine reproductive and respiratory syndrome virus Nsp2 protein, which thereby interferes with NFKBIA degradation and impairs subsequent NF-kappa-B activation.

The protein resides in the cytoplasm. Its subcellular location is the nucleus. Its function is as follows. Inhibits the activity of dimeric NF-kappa-B/REL complexes by trapping REL (RELA/p65 and NFKB1/p50) dimers in the cytoplasm by masking their nuclear localization signals. On cellular stimulation by immune and pro-inflammatory responses, becomes phosphorylated promoting ubiquitination and degradation, enabling the dimeric RELA to translocate to the nucleus and activate transcription. This is NF-kappa-B inhibitor alpha (NFKBIA) from Homo sapiens (Human).